Reading from the N-terminus, the 388-residue chain is Mannitol-1-phosphate 5-dehydrogenase (388 aa).

Position 3 to 14 (3 to 14 (ALHFGAGNIGRG)) interacts with NAD(+).

Belongs to the mannitol dehydrogenase family.

It carries out the reaction D-mannitol 1-phosphate + NAD(+) = beta-D-fructose 6-phosphate + NADH + H(+). In Buchnera aphidicola subsp. Schizaphis graminum (strain Sg), this protein is Mannitol-1-phosphate 5-dehydrogenase.